A 145-amino-acid chain; its full sequence is MIIDITEIMDLIPHRYPFLLVDRVLEIDLNKSIKGIKNVTVNEPQFTGHFPARPVMPGVLMVEAMAQLAAILVAKSLGSTKNKEVFLMAIENAKFRRIVQPGDTMYIHATIDQQRANVWKFSSTVTVEGEMAAESKFTAMIKDKS.

The active site involves H49.

It belongs to the thioester dehydratase family. FabZ subfamily.

Its subcellular location is the cytoplasm. It catalyses the reaction a (3R)-hydroxyacyl-[ACP] = a (2E)-enoyl-[ACP] + H2O. Functionally, involved in unsaturated fatty acids biosynthesis. Catalyzes the dehydration of short chain beta-hydroxyacyl-ACPs and long chain saturated and unsaturated beta-hydroxyacyl-ACPs. The chain is 3-hydroxyacyl-[acyl-carrier-protein] dehydratase FabZ from Rickettsia felis (strain ATCC VR-1525 / URRWXCal2) (Rickettsia azadi).